A 204-amino-acid polypeptide reads, in one-letter code: Proteasome subunit beta (204 aa).

Positions 1–8 are cleaved as a propeptide — removed in mature form; by autocatalysis; that stretch reads MDDKILEG. Thr-9 acts as the Nucleophile in catalysis.

The protein belongs to the peptidase T1B family. In terms of assembly, the 20S proteasome core is composed of 14 alpha and 14 beta subunits that assemble into four stacked heptameric rings, resulting in a barrel-shaped structure. The two inner rings, each composed of seven catalytic beta subunits, are sandwiched by two outer rings, each composed of seven alpha subunits. The catalytic chamber with the active sites is on the inside of the barrel. Has a gated structure, the ends of the cylinder being occluded by the N-termini of the alpha-subunits. Is capped at one or both ends by the proteasome regulatory ATPase, PAN.

It localises to the cytoplasm. The catalysed reaction is Cleavage of peptide bonds with very broad specificity.. The formation of the proteasomal ATPase PAN-20S proteasome complex, via the docking of the C-termini of PAN into the intersubunit pockets in the alpha-rings, triggers opening of the gate for substrate entry. Interconversion between the open-gate and close-gate conformations leads to a dynamic regulation of the 20S proteasome proteolysis activity. Functionally, component of the proteasome core, a large protease complex with broad specificity involved in protein degradation. This chain is Proteasome subunit beta, found in Methanobrevibacter smithii (strain ATCC 35061 / DSM 861 / OCM 144 / PS).